A 123-amino-acid polypeptide reads, in one-letter code: Fluoride-specific ion channel FluC (123 aa).

Transmembrane regions (helical) follow at residues 5-25, 35-55, 67-87, and 100-120; these read IIAL…YISG, IGTL…YGLL, IFLG…SYET, and FANI…GFIL. Residues glycine 75 and serine 78 each coordinate Na(+).

Belongs to the fluoride channel Fluc/FEX (TC 1.A.43) family.

It localises to the cell membrane. It carries out the reaction fluoride(in) = fluoride(out). Na(+) is not transported, but it plays an essential structural role and its presence is essential for fluoride channel function. Fluoride-specific ion channel. Important for reducing fluoride concentration in the cell, thus reducing its toxicity. The sequence is that of Fluoride-specific ion channel FluC from Pyrococcus horikoshii (strain ATCC 700860 / DSM 12428 / JCM 9974 / NBRC 100139 / OT-3).